A 602-amino-acid chain; its full sequence is MPSDRQRKIRNFSIIAHIDHGKSTLADRLIERTGLISQREMQAQVLDNMELERERGITIKLQSIRLIYKAKDGQDYYLNLIDTPGHVDFTYEVSRSLAACEGAILVVDAAQGIEAQTMANVYLALEQNLEIIPVINKIDLPSARPDEIKREIEDIIGLDASEAPLISAKDGLNIDDVLEAIVKNIPPPTEDEEAPLKALVFDSYYDNYKGVVAYTRVVEGTVKKGMKIRMMATKKEFEVTEVGVYSPGPIQLDQLSAGDVGYIAASIKDVRYCRVGDTITDALNPTEHSLPGYRKVTPMVYCGVYPAEGEKYEDVRDALDRLQVNDAALVFEAETSAALGFGFRCGFLGLLHMEIIQERLEREFNLDLVTTAPSVIYRVTKTNGEVVMIQNPANLPVTQEISVIEEPIVKATIMVPSEYAGIVIELCQDRRGEMKGMDYIEETRVNLHYELPLNEVIYDFFDALKSKTKGYGSLDYEMKGYKPSTLVKLDILINSEQVDALSFIVHESKAYARGKGMCEKLKDEIPRHQFPVPLQASIGTKIIARETIRALRKDVLAKCYGGDISRKKKLLEKQKKGKKRMRQVGSVEVPQKAFMSVLKLDT.

The tr-type G domain occupies 7-189 (RKIRNFSIIA…AIVKNIPPPT (183 aa)). Residues 19 to 24 (DHGKST) and 136 to 139 (NKID) contribute to the GTP site.

This sequence belongs to the TRAFAC class translation factor GTPase superfamily. Classic translation factor GTPase family. LepA subfamily.

Its subcellular location is the cell membrane. It carries out the reaction GTP + H2O = GDP + phosphate + H(+). Its function is as follows. Required for accurate and efficient protein synthesis under certain stress conditions. May act as a fidelity factor of the translation reaction, by catalyzing a one-codon backward translocation of tRNAs on improperly translocated ribosomes. Back-translocation proceeds from a post-translocation (POST) complex to a pre-translocation (PRE) complex, thus giving elongation factor G a second chance to translocate the tRNAs correctly. Binds to ribosomes in a GTP-dependent manner. This Alkaliphilus metalliredigens (strain QYMF) protein is Elongation factor 4.